Reading from the N-terminus, the 391-residue chain is Chorismate synthase (391 aa).

Arg-48 provides a ligand contact to NADP(+). FMN-binding positions include 126 to 128 (RAS), Gly-286, 301 to 305 (KPTSS), and Arg-328.

This sequence belongs to the chorismate synthase family. It depends on FMNH2 as a cofactor.

It catalyses the reaction 5-O-(1-carboxyvinyl)-3-phosphoshikimate = chorismate + phosphate. Its pathway is metabolic intermediate biosynthesis; chorismate biosynthesis; chorismate from D-erythrose 4-phosphate and phosphoenolpyruvate: step 7/7. Its function is as follows. Catalyzes the anti-1,4-elimination of the C-3 phosphate and the C-6 proR hydrogen from 5-enolpyruvylshikimate-3-phosphate (EPSP) to yield chorismate, which is the branch point compound that serves as the starting substrate for the three terminal pathways of aromatic amino acid biosynthesis. This reaction introduces a second double bond into the aromatic ring system. The chain is Chorismate synthase from Saccharolobus islandicus (strain Y.N.15.51 / Yellowstone #2) (Sulfolobus islandicus).